We begin with the raw amino-acid sequence, 232 residues long: Large ribosomal subunit protein uL1 (232 aa).

This sequence belongs to the universal ribosomal protein uL1 family. In terms of assembly, part of the 50S ribosomal subunit.

In terms of biological role, binds directly to 23S rRNA. The L1 stalk is quite mobile in the ribosome, and is involved in E site tRNA release. Its function is as follows. Protein L1 is also a translational repressor protein, it controls the translation of the L11 operon by binding to its mRNA. The sequence is that of Large ribosomal subunit protein uL1 from Bacillus pumilus (strain SAFR-032).